The primary structure comprises 64 residues: Temporin-ALd (64 aa).

The signal sequence occupies residues Met1–Cys22. Positions Glu23–Arg46 are excised as a propeptide. Leu62 carries the post-translational modification Leucine amide.

Expressed by the skin glands.

It is found in the secreted. In terms of biological role, antimicrobial peptide with activity against Gram-positive and Gram-negative bacteria and against fungi. Has been tested against S.aureus (MIC=1.25 ug/mL), B.pumilus (MIC=2.5 ug/mL), B.cereus (MIC=15.0 ug/mL), E.coli (MIC=1.25 ug/mL), B.dysenteriae (MIC=5.0 ug/mL), A.cacoaceticus (MIC=15.0 ug/mL), P.aeruginosa (MIC=5.0 ug/mL) and C.albicans (MIC=1.25 ug/mL). Also shows a weak hemolytic activity. The polypeptide is Temporin-ALd (Amolops loloensis (Lolokou Sucker Frog)).